We begin with the raw amino-acid sequence, 470 residues long: Dihydrolipoyl dehydrogenase (470 aa).

Residues 39 to 47 (EKGNLGGVC), Lys56, and Ala119 contribute to the FAD site. A disulfide bond links Cys47 and Cys52. NAD(+) is bound by residues 183–187 (GGGYI), Glu206, and 271–274 (TVGR). FAD-binding residues include Asp314 and Ala322. The active-site Proton acceptor is His446.

This sequence belongs to the class-I pyridine nucleotide-disulfide oxidoreductase family. Homodimer. Identified in a complex with PdhC. It depends on FAD as a cofactor.

It is found in the cytoplasm. The catalysed reaction is N(6)-[(R)-dihydrolipoyl]-L-lysyl-[protein] + NAD(+) = N(6)-[(R)-lipoyl]-L-lysyl-[protein] + NADH + H(+). Functionally, lipoamide dehydrogenase is a component of the alpha-ketoacid dehydrogenase complexes. In Geobacillus stearothermophilus (Bacillus stearothermophilus), this protein is Dihydrolipoyl dehydrogenase (pdhD).